The chain runs to 368 residues: Tubby-like F-box protein 2 (368 aa).

Over residues 1 to 17 the composition is skewed to low complexity; it reads MVPWRRSSSSSSAPSSR. Positions 1–44 are disordered; it reads MVPWRRSSSSSSAPSSRPARRPARTNARVSPDVSSELSPLAGEE. One can recognise an F-box domain in the interval 49–104; the sequence is ERWSALVPDLLADILRCVEAGSERWPPRRDVVACASVCRRWRDVAVAVVQPPLESG.

The protein belongs to the TUB family. As to expression, expressed in stems, leaves, flowers and seeds.

The chain is Tubby-like F-box protein 2 (TULP2) from Oryza sativa subsp. japonica (Rice).